The sequence spans 203 residues: Imidazole glycerol phosphate synthase subunit HisH 1 (203 aa).

Positions 1 to 203 constitute a Glutamine amidotransferase type-1 domain; the sequence is MIAIIDYNAG…KMIENFVELI (203 aa). The Nucleophile role is filled by cysteine 82. Catalysis depends on residues histidine 184 and glutamate 186.

Heterodimer of HisH and HisF.

It localises to the cytoplasm. It catalyses the reaction 5-[(5-phospho-1-deoxy-D-ribulos-1-ylimino)methylamino]-1-(5-phospho-beta-D-ribosyl)imidazole-4-carboxamide + L-glutamine = D-erythro-1-(imidazol-4-yl)glycerol 3-phosphate + 5-amino-1-(5-phospho-beta-D-ribosyl)imidazole-4-carboxamide + L-glutamate + H(+). The enzyme catalyses L-glutamine + H2O = L-glutamate + NH4(+). It participates in amino-acid biosynthesis; L-histidine biosynthesis; L-histidine from 5-phospho-alpha-D-ribose 1-diphosphate: step 5/9. In terms of biological role, IGPS catalyzes the conversion of PRFAR and glutamine to IGP, AICAR and glutamate. The HisH subunit provides the glutamine amidotransferase activity that produces the ammonia necessary to HisF for the synthesis of IGP and AICAR. This chain is Imidazole glycerol phosphate synthase subunit HisH 1 (hisH1), found in Methanococcus maripaludis (strain DSM 14266 / JCM 13030 / NBRC 101832 / S2 / LL).